The primary structure comprises 309 residues: Homoserine O-succinyltransferase (309 aa).

The active-site Acyl-thioester intermediate is cysteine 142. Substrate contacts are provided by lysine 163 and serine 192. Histidine 235 serves as the catalytic Proton acceptor. Residue glutamate 237 is part of the active site. Arginine 249 serves as a coordination point for substrate.

Belongs to the MetA family.

Its subcellular location is the cytoplasm. It carries out the reaction L-homoserine + succinyl-CoA = O-succinyl-L-homoserine + CoA. It participates in amino-acid biosynthesis; L-methionine biosynthesis via de novo pathway; O-succinyl-L-homoserine from L-homoserine: step 1/1. Its function is as follows. Transfers a succinyl group from succinyl-CoA to L-homoserine, forming succinyl-L-homoserine. In Cronobacter sakazakii (strain ATCC BAA-894) (Enterobacter sakazakii), this protein is Homoserine O-succinyltransferase.